A 170-amino-acid polypeptide reads, in one-letter code: Ubiquitin-conjugating enzyme E2 J2-like (170 aa).

The UBC core domain maps to 15-165 (DCITRLKREF…NKTFCELFPY (151 aa)). The Glycyl thioester intermediate role is filled by C97.

The protein belongs to the ubiquitin-conjugating enzyme family.

It carries out the reaction S-ubiquitinyl-[E1 ubiquitin-activating enzyme]-L-cysteine + [E2 ubiquitin-conjugating enzyme]-L-cysteine = [E1 ubiquitin-activating enzyme]-L-cysteine + S-ubiquitinyl-[E2 ubiquitin-conjugating enzyme]-L-cysteine.. The protein operates within protein modification; protein ubiquitination. Functionally, catalyzes the covalent attachment of ubiquitin to other proteins. The polypeptide is Ubiquitin-conjugating enzyme E2 J2-like (Dictyostelium discoideum (Social amoeba)).